The following is a 161-amino-acid chain: pEARLI1-like lipid transfer protein 1 (161 aa).

Residues 1-25 (MASKNSASLALFFALNILFFTLTVA) form the signal peptide. The stretch at 32–39 (PSPKPKPV) is one A-1 repeat. Residues 32–76 (PSPKPKPVPSPKPKPVQCPPPPRPSVPSPNPRPVTPPRTPGSSGN) form a disordered region. The segment covering 33–70 (SPKPKPVPSPKPKPVQCPPPPRPSVPSPNPRPVTPPRT) has biased composition (pro residues). Positions 34–49 (PKPKPVPSPKPKPVQC) are 2 X 8 AA tandem repeats A of P-S-P-K-P-K-P-V. An A-2 repeat occupies 40 to 47 (PSPKPKPV).

It belongs to the plant LTP family. PEARLI1 subfamily. In terms of assembly, self-interacts and binds to DIR1. Interacts with PDLP1.

It localises to the secreted. The protein resides in the cell wall. The protein localises to the endoplasmic reticulum. Its subcellular location is the cell junction. It is found in the plasmodesma. It localises to the plastid. The protein resides in the chloroplast. Functionally, probable lipid transfer protein (LTP). Seems to control the flowering process and lignin synthesis. Together with DIR1, required for glycerol-3-phosphate- (G3P) and azelaic acid- (AA) induced systemic acquired resistance (SAR). Component of plant systemic immunity involved in priming defenses in a AA-dependent manner, by modulating production and/or translocation of a mobile signal(s) during SAR. Confers resistance to Botrytis cinerea and Pseudomonas syringae pv. tomato DC3000 and PmaDG3. May be involved in induced systemic resistance (ISR) mediated by non-pathogenic bacteria (e.g. P. fluorescens GM30). Prevents electrolyte leakage during freezing damage. The protein is pEARLI1-like lipid transfer protein 1 (AZI1) of Arabidopsis thaliana (Mouse-ear cress).